Consider the following 433-residue polypeptide: Enolase (433 aa).

A (2R)-2-phosphoglycerate-binding site is contributed by Q164. Catalysis depends on E206, which acts as the Proton donor. 3 residues coordinate Mg(2+): D243, E289, and D316. Residues K341, R370, S371, and K392 each contribute to the (2R)-2-phosphoglycerate site. Catalysis depends on K341, which acts as the Proton acceptor.

It belongs to the enolase family. Mg(2+) serves as cofactor.

It is found in the cytoplasm. The protein localises to the secreted. The protein resides in the cell surface. It catalyses the reaction (2R)-2-phosphoglycerate = phosphoenolpyruvate + H2O. It participates in carbohydrate degradation; glycolysis; pyruvate from D-glyceraldehyde 3-phosphate: step 4/5. Its function is as follows. Catalyzes the reversible conversion of 2-phosphoglycerate (2-PG) into phosphoenolpyruvate (PEP). It is essential for the degradation of carbohydrates via glycolysis. The chain is Enolase from Borrelia hermsii (strain HS1 / DAH).